Consider the following 407-residue polypeptide: MNGYISPLPDAAWNSRFPRSLVLLGSTGSIGTSALRVVERQPELFRITALAGARNVRLLARQAAAYRPPHLAVINGNAADELASLLPAGYRPRIHTGQEGYEFLAALPEADCVLSAQVGAAGLRATVAAARAGKTIALANKESLVLAGGLIRRLCHETGASVLPVDSEHNAIFQALQGHDAAQMRRIILTASGGPFRGRDRTFLQSVTREQALNHPNWSMGAKISIDSATLMNKGLEVIEACHLYNAPLEKVEVVVHPQSIIHSLVEYNDGSQIAHMGTPDMRIAIAYCLGWPRVMHTGVEPLDLLSVGSLTFESPDISLFPCLELARKAYAGGNGLPVVLNAANEVAVDLFLQGAIAFLDIPRLIEAAMQAHDAAPHQNMYDEVESILTLDKTTRRVTADLAGARG.

Positions 27, 28, 29, 30, 53, 54, 55, and 140 each coordinate NADPH. Lysine 141 is a 1-deoxy-D-xylulose 5-phosphate binding site. Glutamate 142 provides a ligand contact to NADPH. A Mn(2+)-binding site is contributed by aspartate 166. 1-deoxy-D-xylulose 5-phosphate contacts are provided by serine 167, glutamate 168, serine 192, and histidine 215. Position 168 (glutamate 168) interacts with Mn(2+). Glycine 221 contributes to the NADPH binding site. 1-deoxy-D-xylulose 5-phosphate contacts are provided by serine 228, asparagine 233, lysine 234, and glutamate 237. Glutamate 237 lines the Mn(2+) pocket.

Belongs to the DXR family. The cofactor is Mg(2+). Mn(2+) is required as a cofactor.

The catalysed reaction is 2-C-methyl-D-erythritol 4-phosphate + NADP(+) = 1-deoxy-D-xylulose 5-phosphate + NADPH + H(+). It functions in the pathway isoprenoid biosynthesis; isopentenyl diphosphate biosynthesis via DXP pathway; isopentenyl diphosphate from 1-deoxy-D-xylulose 5-phosphate: step 1/6. Catalyzes the NADPH-dependent rearrangement and reduction of 1-deoxy-D-xylulose-5-phosphate (DXP) to 2-C-methyl-D-erythritol 4-phosphate (MEP). The protein is 1-deoxy-D-xylulose 5-phosphate reductoisomerase of Oleidesulfovibrio alaskensis (strain ATCC BAA-1058 / DSM 17464 / G20) (Desulfovibrio alaskensis).